The sequence spans 505 residues: Cyclin-dependent kinase C-1 (505 aa).

The 300-residue stretch at 26–325 (FEKLEQIGEG…AKDALDAEYF (300 aa)) folds into the Protein kinase domain. ATP is bound by residues 32–40 (IGEGTYGQV) and K55. Y37 is modified (phosphotyrosine). D164 (proton acceptor) is an active-site residue. T198 is subject to Phosphothreonine. The interval 336–505 (SLPTYESSHE…QRNQQYGWQQ (170 aa)) is disordered. Residues 429–456 (PPSGNQSGGYNQSRGGYSSGSYPPQGRG) show a composition bias toward low complexity. Gly residues predominate over residues 482–491 (GQYGGSGSSG). Positions 492–505 (RGQNQRNQQYGWQQ) are enriched in low complexity.

Belongs to the protein kinase superfamily. CMGC Ser/Thr protein kinase family. CDC2/CDKX subfamily. In terms of assembly, interacts with CYCT1-3. Highly expressed in flowers. Expressed in seedlings, roots, rosettes and stems.

The enzyme catalyses L-seryl-[protein] + ATP = O-phospho-L-seryl-[protein] + ADP + H(+). It catalyses the reaction L-threonyl-[protein] + ATP = O-phospho-L-threonyl-[protein] + ADP + H(+). The catalysed reaction is [DNA-directed RNA polymerase] + ATP = phospho-[DNA-directed RNA polymerase] + ADP + H(+). This is Cyclin-dependent kinase C-1 (CDKC-1) from Arabidopsis thaliana (Mouse-ear cress).